We begin with the raw amino-acid sequence, 554 residues long: Hydroxylamine reductase (554 aa).

C3, C6, C18, and C25 together coordinate [2Fe-2S] cluster. Hybrid [4Fe-2O-2S] cluster contacts are provided by H252, E276, C320, C408, C436, C461, E495, and K497. C408 carries the post-translational modification Cysteine persulfide.

This sequence belongs to the HCP family. [2Fe-2S] cluster is required as a cofactor. Requires hybrid [4Fe-2O-2S] cluster as cofactor.

It is found in the cytoplasm. It catalyses the reaction A + NH4(+) + H2O = hydroxylamine + AH2 + H(+). Functionally, catalyzes the reduction of hydroxylamine to form NH(3) and H(2)O. This chain is Hydroxylamine reductase, found in Shewanella oneidensis (strain ATCC 700550 / JCM 31522 / CIP 106686 / LMG 19005 / NCIMB 14063 / MR-1).